Here is a 213-residue protein sequence, read N- to C-terminus: StAR-related lipid transfer protein 5 (213 aa).

The START domain occupies Met1–Gly213.

Functionally, may be involved in the intracellular transport of sterols or other lipids. May bind cholesterol or other sterols. This is StAR-related lipid transfer protein 5 (STARD5) from Bos taurus (Bovine).